Reading from the N-terminus, the 449-residue chain is Gamma-glutamyl phosphate reductase (449 aa).

This sequence belongs to the gamma-glutamyl phosphate reductase family.

The protein localises to the cytoplasm. The catalysed reaction is L-glutamate 5-semialdehyde + phosphate + NADP(+) = L-glutamyl 5-phosphate + NADPH + H(+). Its pathway is amino-acid biosynthesis; L-proline biosynthesis; L-glutamate 5-semialdehyde from L-glutamate: step 2/2. Catalyzes the NADPH-dependent reduction of L-glutamate 5-phosphate into L-glutamate 5-semialdehyde and phosphate. The product spontaneously undergoes cyclization to form 1-pyrroline-5-carboxylate. The protein is Gamma-glutamyl phosphate reductase of Methanococcoides burtonii (strain DSM 6242 / NBRC 107633 / OCM 468 / ACE-M).